A 574-amino-acid chain; its full sequence is Sulfate adenylyltransferase (574 aa).

The tract at residues 1–170 (MANPPHGGVL…VEAIDRLEHY (170 aa)) is N-terminal. A catalytic region spans residues 171 to 395 (DYVGLRYTPA…LRESHPPRNQ (225 aa)). Gln-198 is a binding site for sulfate. Residues 198-201 (QTRN) and 292-295 (GRDH) each bind ATP. Catalysis depends on residues Thr-199, Arg-200, and Asn-201. Residue Arg-200 participates in sulfate binding. Ala-296 is a binding site for sulfate. ATP is bound at residue Met-334. The allosteric regulation domain; adenylyl-sulfate kinase-like stretch occupies residues 396-574 (QGFTVFLTGY…LESQGLLTQL (179 aa)). 3'-phosphoadenylyl sulfate is bound by residues 435–438 (ETVR), Arg-452, 478–479 (IA), and Arg-516.

The protein in the N-terminal section; belongs to the sulfate adenylyltransferase family. In the C-terminal section; belongs to the APS kinase family. Homohexamer. Dimer of trimers.

The protein localises to the cytoplasm. It catalyses the reaction sulfate + ATP + H(+) = adenosine 5'-phosphosulfate + diphosphate. Its pathway is sulfur metabolism; hydrogen sulfide biosynthesis; sulfite from sulfate: step 1/3. With respect to regulation, allosterically inhibited by 3'-phosphoadenosine 5'-phosphosulfate (PAPS). Catalyzes the first intracellular reaction of sulfate assimilation, forming adenosine-5'-phosphosulfate (APS) from inorganic sulfate and ATP. Plays an important role in sulfate activation as a component of the biosynthesis pathway of sulfur-containing amino acids. The sequence is that of Sulfate adenylyltransferase from Phaeosphaeria nodorum (strain SN15 / ATCC MYA-4574 / FGSC 10173) (Glume blotch fungus).